Consider the following 269-residue polypeptide: UPF0162 protein BUsg_167 (269 aa).

The protein belongs to the UPF0162 family.

The chain is UPF0162 protein BUsg_167 from Buchnera aphidicola subsp. Schizaphis graminum (strain Sg).